A 133-amino-acid polypeptide reads, in one-letter code: Large ribosomal subunit protein eL32z (133 aa).

This sequence belongs to the eukaryotic ribosomal protein eL32 family.

In Arabidopsis thaliana (Mouse-ear cress), this protein is Large ribosomal subunit protein eL32z (RPL32A).